Reading from the N-terminus, the 394-residue chain is Protein arginine N-methyltransferase 8 (394 aa).

The N-myristoyl glycine moiety is linked to residue glycine 2. The segment at 21–40 is disordered; sequence VESTEVSSAPPQPPQPVIPA. Short sequence motifs (SH3-binding) lie at residues 29-42 and 53-58; these read APPQ…PAKP and PSCPGR. Positions 30–39 are enriched in pro residues; the sequence is PPQPPQPVIP. Arginine 58 is subject to Omega-N-methylarginine; by PRMT8. Arginine 73 carries the asymmetric dimethylarginine; by PRMT8 modification. Residues 73–394 enclose the SAM-dependent MTase PRMT-type domain; the sequence is RDYYFDSYAH…TSVSNDYKMR (322 aa). S-adenosyl-L-methionine-binding positions include histidine 86, arginine 95, glycine 119, 119 to 122, glutamate 141, and glutamate 170; that span reads GSGT. Residues glutamate 185 and glutamate 194 contribute to the active site.

The protein belongs to the class I-like SAM-binding methyltransferase superfamily. Protein arginine N-methyltransferase family. PRMT8 subfamily. In terms of assembly, homodimer. Tetramer; individual homodimers associates to form a homotetramer. Homooctamer; individual homodimers associates to form a homooctamer and homooligomerization is required for proper localization to the cell membrane. Heterodimer with PRMT1; heterodimerization may recruit PRMT1 activity to the plasma membrane. Interacts with PRMT2 (via the SH3 domain). Interacts with FYN (via the SH3 domain). Interacts with EWS; independently of EWS methylation status. In terms of tissue distribution, brain-specific. Only expressed in neurons, especially in the somatosensory and limbic systems, and a part of motor system. Highly expressed in all of the regions related to general somatosensory system. Expressed in most of the relay nuclei intervening the special somatosensory system, such as the auditory, visual and vestibular systems. Also present in forebrain limbic areas and thalamic nuclei relevant to limbic areas and in areas related to the motor system, such as the caudate putamen, Purkinje cells, inferior olivary nucleus and cerebellar nuclei.

It is found in the cell membrane. It catalyses the reaction L-arginyl-[protein] + S-adenosyl-L-methionine = N(omega)-methyl-L-arginyl-[protein] + S-adenosyl-L-homocysteine + H(+). The catalysed reaction is L-arginyl-[protein] + 2 S-adenosyl-L-methionine = N(omega),N(omega)-dimethyl-L-arginyl-[protein] + 2 S-adenosyl-L-homocysteine + 2 H(+). In terms of biological role, S-adenosyl-L-methionine-dependent and membrane-associated arginine methyltransferase that can both catalyze the formation of omega-N monomethylarginine (MMA) and asymmetrical dimethylarginine (aDMA) in proteins such as NIFK, myelin basic protein, histone H4, H2A and H2A/H2B dimer. Able to mono- and dimethylate EWS protein; however its precise role toward EWS remains unclear as it still interacts with fully methylated EWS. The sequence is that of Protein arginine N-methyltransferase 8 from Mus musculus (Mouse).